The sequence spans 1063 residues: Kinesin-like protein KIN-7H (1063 aa).

A Kinesin motor domain is found at 18-342 (KIYVSVRMRP…LLFASCAKEV (325 aa)). Residue 106–113 (GQTSSGKT) participates in ATP binding. Residues 351–436 (VMSDKALVKH…KNQEKETLST (86 aa)) adopt a coiled-coil conformation. The disordered stretch occupies residues 574–664 (SDISIGPVEN…ESNLTKNPAL (91 aa)).

It belongs to the TRAFAC class myosin-kinesin ATPase superfamily. Kinesin family. KIN-7 subfamily.

The chain is Kinesin-like protein KIN-7H from Arabidopsis thaliana (Mouse-ear cress).